We begin with the raw amino-acid sequence, 283 residues long: Large ribosomal subunit protein mL46 (283 aa).

K217 carries the N6-succinyllysine modification. The residue at position 228 (K228) is an N6-acetyllysine. At K246 the chain carries N6-succinyllysine.

It belongs to the mitochondrion-specific ribosomal protein mL46 family. Component of the mitochondrial ribosome large subunit (39S) which comprises a 16S rRNA and about 50 distinct proteins.

It is found in the mitochondrion. This is Large ribosomal subunit protein mL46 (Mrpl46) from Mus musculus (Mouse).